A 322-amino-acid polypeptide reads, in one-letter code: Quinolinate synthase (322 aa).

The iminosuccinate site is built by histidine 38 and serine 55. [4Fe-4S] cluster is bound at residue cysteine 100. Iminosuccinate-binding positions include 126-128 and serine 143; that span reads YIN. Cysteine 186 contributes to the [4Fe-4S] cluster binding site. Residues 212-214 and threonine 229 contribute to the iminosuccinate site; that span reads HPE. Cysteine 279 is a [4Fe-4S] cluster binding site.

The protein belongs to the quinolinate synthase family. Type 2 subfamily. [4Fe-4S] cluster serves as cofactor.

The protein localises to the cytoplasm. It catalyses the reaction iminosuccinate + dihydroxyacetone phosphate = quinolinate + phosphate + 2 H2O + H(+). The protein operates within cofactor biosynthesis; NAD(+) biosynthesis; quinolinate from iminoaspartate: step 1/1. Catalyzes the condensation of iminoaspartate with dihydroxyacetone phosphate to form quinolinate. The sequence is that of Quinolinate synthase from Cyanothece sp. (strain PCC 7425 / ATCC 29141).